A 321-amino-acid chain; its full sequence is Glycerol-3-phosphate dehydrogenase [NAD(P)+] (321 aa).

Positions 10, 11, 31, 32, and 104 each coordinate NADPH. Sn-glycerol 3-phosphate contacts are provided by K104 and G132. NADPH is bound at residue A136. Positions 186, 238, 248, 249, and 250 each coordinate sn-glycerol 3-phosphate. K186 serves as the catalytic Proton acceptor. An NADPH-binding site is contributed by R249. An NADPH-binding site is contributed by E272.

This sequence belongs to the NAD-dependent glycerol-3-phosphate dehydrogenase family.

It is found in the cytoplasm. It carries out the reaction sn-glycerol 3-phosphate + NAD(+) = dihydroxyacetone phosphate + NADH + H(+). It catalyses the reaction sn-glycerol 3-phosphate + NADP(+) = dihydroxyacetone phosphate + NADPH + H(+). In terms of biological role, catalyzes the reduction of the glycolytic intermediate dihydroxyacetone phosphate (DHAP) to sn-glycerol 3-phosphate (G3P). The chain is Glycerol-3-phosphate dehydrogenase [NAD(P)+] from Methanothermobacter thermautotrophicus (strain ATCC 29096 / DSM 1053 / JCM 10044 / NBRC 100330 / Delta H) (Methanobacterium thermoautotrophicum).